The sequence spans 497 residues: Arginine/ornithine antiporter ArcD2 (497 aa).

Transmembrane regions (helical) follow at residues 8–28 (GISL…GGVF), 41–61 (GGVV…VLSF), 88–108 (FLSG…FAVL), 127–147 (SLTI…MLLV), 160–180 (IVMI…IILF), 220–240 (IKGS…ATMM), 255–275 (VIGL…PYGY), 297–317 (VGGW…LGAW), 354–374 (LLIT…VANA), 378–398 (FIYM…AYLF), 406–426 (SVKN…ALYL), 429–449 (WQYV…FIGA), and 462–482 (WLGM…LICG).

The protein belongs to the amino acid-polyamine-organocation (APC) superfamily. Basic amino acid/polyamine antiporter (APA) (TC 2.A.3.2) family.

The protein resides in the cell membrane. It catalyses the reaction L-ornithine(in) + L-arginine(out) = L-ornithine(out) + L-arginine(in). Its function is as follows. Catalyzes electroneutral exchange between L-arginine and L-ornithine. Can also efficiently translocate L-alanine. May function in vivo as a L-arginine/L-alanine exchanger in a pathway together with the arcT gene, which is found adjacent to the arcD2 gene in the ADI gene cluster. The sequence is that of Arginine/ornithine antiporter ArcD2 from Lactococcus lactis subsp. cremoris (strain MG1363).